We begin with the raw amino-acid sequence, 109 residues long: AMTDVLSAEDIKKAVGAFSAAESFNYKKFFEMVGLKKKSPEDVKKVFHILDKDRSGFIEEEELKFVLKGFTPDGRDLSDKETKALLAAGDKDGDGKIGADEFATMVAES.

An N-acetylalanine modification is found at alanine 1. EF-hand domains are found at residues lysine 38–aspartate 73 and leucine 77–serine 109. Positions 51, 53, 55, 62, 90, 92, 94, 96, and 101 each coordinate Ca(2+).

Belongs to the parvalbumin family.

In muscle, parvalbumin is thought to be involved in relaxation after contraction. It binds two calcium ions. The chain is Parvalbumin, muscle from Gallus gallus (Chicken).